The sequence spans 318 residues: 2-keto-3-deoxygluconate permease (318 aa).

Transmembrane regions (helical) follow at residues 10–30 (LPGG…TLWP), 42–62 (GLIS…GATI), 82–102 (IAVA…GGVS), 109–129 (LSVL…YAAL), 139–159 (AGAV…LILG), 163–183 (LASF…LGFA), 201–221 (TLVP…TIAH), 224–244 (TSGV…LLLA), 257–277 (VAAS…AGMA), and 289–309 (ALVA…TALY).

This sequence belongs to the KdgT transporter family.

The protein resides in the cell inner membrane. It catalyses the reaction 2-dehydro-3-deoxy-D-gluconate(in) + H(+)(in) = 2-dehydro-3-deoxy-D-gluconate(out) + H(+)(out). Catalyzes the proton-dependent uptake of 2-keto-3-deoxygluconate (KDG) into the cell. This Xanthomonas axonopodis pv. citri (strain 306) protein is 2-keto-3-deoxygluconate permease.